Consider the following 641-residue polypeptide: ATP-dependent DNA helicase PIF1 (641 aa).

The tract at residues 1–180 is PINT; the sequence is MLSGIEAAAG…LVKRPVEPQA (180 aa). Residues Ser27 and Ser151 each carry the phosphoserine modification. Residues 167–641 form a hydrolyzes ATP in the presence of both magnesium and single-stranded DNA; weak activity in the presence of RNA or double-stranded DNA; No unwinding activity region; it reads PDTTLVKRPV…SDQENMDPIL (475 aa). The interval 173-192 is disordered; the sequence is KRPVEPQAGAEPSTEAPRWP. 228 to 235 contacts ATP; sequence GSAGTGKS. The DNA-binding element occupies 577–596; the sequence is QAYVALSRARSLQGLRVLDF. Residues 622–641 are disordered; the sequence is LESPDDDEAASDQENMDPIL. A compositionally biased stretch (acidic residues) spans 624–641; that stretch reads SPDDDEAASDQENMDPIL.

It belongs to the helicase family. PIF1 subfamily. In terms of assembly, monomer. Interacts with telomerase. The cofactor is Mg(2+). As to expression, weak ubiquitous expression.

Its subcellular location is the nucleus. It is found in the mitochondrion. It carries out the reaction Couples ATP hydrolysis with the unwinding of duplex DNA at the replication fork by translocating in the 5'-3' direction. This creates two antiparallel DNA single strands (ssDNA). The leading ssDNA polymer is the template for DNA polymerase III holoenzyme which synthesizes a continuous strand.. The catalysed reaction is ATP + H2O = ADP + phosphate + H(+). DNA-dependent ATPase and 5'-3' DNA helicase required for the maintenance of both mitochondrial and nuclear genome stability. Efficiently unwinds G-quadruplex (G4) DNA structures and forked RNA-DNA hybrids. Resolves G4 structures, preventing replication pausing and double-strand breaks (DSBs) at G4 motifs. Involved in the maintenance of telomeric DNA. Inhibits telomere elongation, de novo telomere formation and telomere addition to DSBs via catalytic inhibition of telomerase. Reduces the processivity of telomerase by displacing active telomerase from DNA ends. Releases telomerase by unwinding the short telomerase RNA/telomeric DNA hybrid that is the intermediate in the telomerase reaction. Possesses an intrinsic strand annealing activity. The sequence is that of ATP-dependent DNA helicase PIF1 from Homo sapiens (Human).